Consider the following 131-residue polypeptide: MVERTAVFPAGRHSLYAEHRYSAAIRSGDLLFVSGQVGSREDGTPEPDFQQQVRLAFDNLHATLAAAGCTFDDIIDVTSFHTDPENQFEDIMTVKNEIFSAPPYPNWTAVGVTWLAGFDFEIKVIARIPEQ.

This sequence belongs to the RutC family.

The sequence is that of RutC family protein YjgH (yjgH) from Escherichia coli (strain K12).